Reading from the N-terminus, the 92-residue chain is MANHSSAKKAARQTVKRTLINKKRSSAIKTFIKKVVHEISIGNKENANIALSVAQSKIMQGVKKNIIKLNTASRKISRLSRQIKSLKVNNTL.

This sequence belongs to the bacterial ribosomal protein bS20 family.

In terms of biological role, binds directly to 16S ribosomal RNA. The protein is Small ribosomal subunit protein bS20 of Rickettsia conorii (strain ATCC VR-613 / Malish 7).